The primary structure comprises 954 residues: Glycine dehydrogenase (decarboxylating) (954 aa).

An N6-(pyridoxal phosphate)lysine modification is found at Lys-704.

This sequence belongs to the GcvP family. The glycine cleavage system is composed of four proteins: P, T, L and H. Pyridoxal 5'-phosphate is required as a cofactor.

It catalyses the reaction N(6)-[(R)-lipoyl]-L-lysyl-[glycine-cleavage complex H protein] + glycine + H(+) = N(6)-[(R)-S(8)-aminomethyldihydrolipoyl]-L-lysyl-[glycine-cleavage complex H protein] + CO2. Functionally, the glycine cleavage system catalyzes the degradation of glycine. The P protein binds the alpha-amino group of glycine through its pyridoxal phosphate cofactor; CO(2) is released and the remaining methylamine moiety is then transferred to the lipoamide cofactor of the H protein. The sequence is that of Glycine dehydrogenase (decarboxylating) from Vibrio vulnificus (strain CMCP6).